A 617-amino-acid chain; its full sequence is UvrABC system protein C (617 aa).

In terms of domain architecture, GIY-YIG spans E12–V91. Positions E203–I238 constitute a UVR domain.

It belongs to the UvrC family. In terms of assembly, interacts with UvrB in an incision complex.

It is found in the cytoplasm. In terms of biological role, the UvrABC repair system catalyzes the recognition and processing of DNA lesions. UvrC both incises the 5' and 3' sides of the lesion. The N-terminal half is responsible for the 3' incision and the C-terminal half is responsible for the 5' incision. This Caldanaerobacter subterraneus subsp. tengcongensis (strain DSM 15242 / JCM 11007 / NBRC 100824 / MB4) (Thermoanaerobacter tengcongensis) protein is UvrABC system protein C.